The following is a 606-amino-acid chain: RUN and FYVE domain-containing protein 2 (606 aa).

One can recognise an RUN domain in the interval 37 to 169 (DSDYPPLQQF…IDANLCVKGE (133 aa)). Residues 210–534 (EELNRQLNST…IKEANKALQG (325 aa)) adopt a coiled-coil conformation. An FYVE-type zinc finger spans residues 540-598 (DKEATHCKLCEKEFSLSKRKHHCRNCGEIFCNACSDNELPLPSSPKPVRVCDSCHALLI). Positions 546, 549, 562, 565, 570, 573, 590, and 593 each coordinate Zn(2+).

Interacts with BMX.

It localises to the nucleus. The protein is RUN and FYVE domain-containing protein 2 (RUFY2) of Pongo abelii (Sumatran orangutan).